A 208-amino-acid chain; its full sequence is Imidazoleglycerol-phosphate dehydratase (208 aa).

The protein belongs to the imidazoleglycerol-phosphate dehydratase family.

The protein resides in the cytoplasm. It catalyses the reaction D-erythro-1-(imidazol-4-yl)glycerol 3-phosphate = 3-(imidazol-4-yl)-2-oxopropyl phosphate + H2O. The protein operates within amino-acid biosynthesis; L-histidine biosynthesis; L-histidine from 5-phospho-alpha-D-ribose 1-diphosphate: step 6/9. In Mycobacterium sp. (strain JLS), this protein is Imidazoleglycerol-phosphate dehydratase.